The chain runs to 230 residues: uncharacterized protein (230 aa).

Residues methionine 1–alanine 57 form a disordered region. Residues alanine 38–proline 55 show a composition bias toward low complexity. The helical transmembrane segment at leucine 75–tyrosine 95 threads the bilayer.

It localises to the membrane. This is an uncharacterized protein from Mycobacterium tuberculosis (strain CDC 1551 / Oshkosh).